The primary structure comprises 259 residues: Bisphosphoglycerate mutase (259 aa).

Residue serine 2 is modified to N-acetylserine. N-linked (Glc) (glycation) lysine; in vitro glycosylation is found at lysine 3 and lysine 5. Substrate is bound at residue 10 to 17 (RHGEGAWN). The Tele-phosphohistidine intermediate role is filled by histidine 11. N-linked (Glc) (glycation) lysine; in vitro glycosylation is present at lysine 18. 23 to 24 (CS) provides a ligand contact to substrate. Lysine 43 carries N-linked (Glc) (glycation) lysine; in vitro glycosylation. Substrate contacts are provided by residues arginine 62, 89–92 (ERHY), arginine 100, and 116–117 (RR). Glutamate 89 acts as the Proton donor/acceptor in catalysis. The residue at position 122 (threonine 122) is a Phosphothreonine. Lysine 159 carries N-linked (Glc) (glycation) lysine glycosylation. Position 189–190 (189–190 (GN)) interacts with substrate. The N-linked (Glc) (glycation) lysine; in vitro glycan is linked to lysine 197.

This sequence belongs to the phosphoglycerate mutase family. BPG-dependent PGAM subfamily. In terms of assembly, homodimer. Glycation of Lys-159 in diabetic patients inactivates the enzyme. As to expression, expressed in red blood cells. Expressed in non-erythroid cells of the placenta; present in the syncytiotrophoblast layer of the placental villi at the feto-maternal interface (at protein level).

The enzyme catalyses (2R)-3-phospho-glyceroyl phosphate = (2R)-2,3-bisphosphoglycerate + H(+). The catalysed reaction is (2R)-2-phosphoglycerate = (2R)-3-phosphoglycerate. At alkaline pH BPGM favors the synthase reaction; however, at lower pH the phosphatase reaction is dominant. Inhibited by citrate. Plays a major role in regulating hemoglobin oxygen affinity by controlling the levels of its allosteric effector 2,3-bisphosphoglycerate (2,3-BPG). Also exhibits mutase (EC 5.4.2.11) activity. The protein is Bisphosphoglycerate mutase (BPGM) of Homo sapiens (Human).